Reading from the N-terminus, the 728-residue chain is Catalase-peroxidase 1 (728 aa).

Positions 1-22 (MDKTQSSQGKCPVMHGANSAVA) are cleaved as a signal peptide. Residues 97 to 225 (WHSAGTYRVA…LAAVMMGLIY (129 aa)) constitute a cross-link (tryptophyl-tyrosyl-methioninium (Trp-Tyr) (with M-251)). Residue His98 is the Proton acceptor of the active site. Positions 225 to 251 (YVNPEGVDGKPDPLRTAQDVRVTFARM) form a cross-link, tryptophyl-tyrosyl-methioninium (Tyr-Met) (with W-97). His266 is a heme b binding site.

Belongs to the peroxidase family. Peroxidase/catalase subfamily. Homodimer or homotetramer. Requires heme b as cofactor. In terms of processing, formation of the three residue Trp-Tyr-Met cross-link is important for the catalase, but not the peroxidase activity of the enzyme.

The enzyme catalyses H2O2 + AH2 = A + 2 H2O. It catalyses the reaction 2 H2O2 = O2 + 2 H2O. Its function is as follows. Bifunctional enzyme with both catalase and broad-spectrum peroxidase activity. In Shewanella sp. (strain MR-7), this protein is Catalase-peroxidase 1.